The primary structure comprises 468 residues: UDP-N-acetylmuramate--L-alanine ligase (468 aa).

122 to 128 (GSHGKTT) contacts ATP.

This sequence belongs to the MurCDEF family.

The protein resides in the cytoplasm. It carries out the reaction UDP-N-acetyl-alpha-D-muramate + L-alanine + ATP = UDP-N-acetyl-alpha-D-muramoyl-L-alanine + ADP + phosphate + H(+). Its pathway is cell wall biogenesis; peptidoglycan biosynthesis. In terms of biological role, cell wall formation. The sequence is that of UDP-N-acetylmuramate--L-alanine ligase from Synechococcus sp. (strain CC9902).